A 171-amino-acid polypeptide reads, in one-letter code: Ribosome maturation factor RimM (171 aa).

Residues 97–170 enclose the PRC barrel domain; the sequence is EGEYYYHEII…LVTIHVMEGL (74 aa).

This sequence belongs to the RimM family. Binds ribosomal protein uS19.

The protein localises to the cytoplasm. An accessory protein needed during the final step in the assembly of 30S ribosomal subunit, possibly for assembly of the head region. Essential for efficient processing of 16S rRNA. May be needed both before and after RbfA during the maturation of 16S rRNA. It has affinity for free ribosomal 30S subunits but not for 70S ribosomes. This Bacillus cereus (strain ATCC 14579 / DSM 31 / CCUG 7414 / JCM 2152 / NBRC 15305 / NCIMB 9373 / NCTC 2599 / NRRL B-3711) protein is Ribosome maturation factor RimM.